Here is a 65-residue protein sequence, read N- to C-terminus: Small ribosomal subunit protein bS21 (65 aa).

Residues 43–52 show a composition bias toward basic and acidic residues; sequence EKKRVKEALA. The interval 43-65 is disordered; that stretch reads EKKRVKEALARKRSRKKARKEQD. Basic residues predominate over residues 53-65; it reads RKRSRKKARKEQD.

This sequence belongs to the bacterial ribosomal protein bS21 family.

The polypeptide is Small ribosomal subunit protein bS21 (Koribacter versatilis (strain Ellin345)).